Consider the following 119-residue polypeptide: Putative mating-type protein A2 (119 aa).

Residues K38–T100 constitute a DNA-binding region (homeobox; TALE-type).

It belongs to the TALE/M-ATYP homeobox family.

The protein resides in the nucleus. Functionally, probably not a functional protein. Cells lacking A2 show no obvious alterations in mating, sporulation and cell growth. The sequence is that of Putative mating-type protein A2 (MATA2) from Saccharomyces cerevisiae (Baker's yeast).